The following is a 235-amino-acid chain: Homeobox protein Nkx-2.8 (235 aa).

Positions 51–67 (SDESGLETSPADSSQLA) are enriched in polar residues. The interval 51-86 (SDESGLETSPADSSQLASLRRESPGSDPEKRRKRRV) is disordered. Basic and acidic residues predominate over residues 69–80 (LRRESPGSDPEK). Positions 81–140 (RRKRRVLFSKAQTLELERRFRQQRYLSAPEREQLARLLRLTPTQVKIWFQNHRYKLKRGR) form a DNA-binding region, homeobox.

The protein belongs to the NK-2 homeobox family. As to expression, prominent expression in ventral brain and neural tube structures.

It localises to the nucleus. Possible role in the specification of a distinct subset of neurons. The polypeptide is Homeobox protein Nkx-2.8 (Nkx2-8) (Mus musculus (Mouse)).